The following is a 149-amino-acid chain: Endoribonuclease YbeY (149 aa).

Zn(2+)-binding residues include histidine 101, histidine 105, and histidine 111.

This sequence belongs to the endoribonuclease YbeY family. Zn(2+) is required as a cofactor.

The protein localises to the cytoplasm. Its function is as follows. Single strand-specific metallo-endoribonuclease involved in late-stage 70S ribosome quality control and in maturation of the 3' terminus of the 16S rRNA. This chain is Endoribonuclease YbeY, found in Thermotoga neapolitana (strain ATCC 49049 / DSM 4359 / NBRC 107923 / NS-E).